The following is a 227-amino-acid chain: Uridylate kinase (227 aa).

7–11 (KISGK) lines the ATP pocket. Gly-44 lines the UMP pocket. The ATP site is built by Gly-45 and Arg-49. Residues Asp-66 and 114 to 120 (FQPGQST) contribute to the UMP site. ATP-binding residues include Thr-140, Asn-141, Tyr-146, and Asp-149.

Belongs to the UMP kinase family. In terms of assembly, homohexamer.

Its subcellular location is the cytoplasm. It catalyses the reaction UMP + ATP = UDP + ADP. It functions in the pathway pyrimidine metabolism; CTP biosynthesis via de novo pathway; UDP from UMP (UMPK route): step 1/1. Unlike most bacteria, is not activated by GTP. UTP acts as a competitive inhibitor against both substrates. High concentration of UMP abolishes the inhibition of UTP at low ATP concentrations, indicating that UTP binds to the acceptor site (UMP site). Its function is as follows. Catalyzes the reversible phosphorylation of UMP to UDP, with ATP as the most efficient phosphate donor. Is also able to phosphorylate dUMP, although much less efficiently. In Saccharolobus solfataricus (strain ATCC 35092 / DSM 1617 / JCM 11322 / P2) (Sulfolobus solfataricus), this protein is Uridylate kinase (pyrH).